Consider the following 598-residue polypeptide: Vanadium-dependent bromoperoxidase (598 aa).

Positions 361, 363, 365, 368, and 370 each coordinate Ca(2+). 2 residues coordinate vanadate: lysine 400 and arginine 408. Residue histidine 480 is part of the active site. Vanadate is bound by residues serine 485, glycine 486, histidine 487, arginine 547, and histidine 553. Histidine 487 is a catalytic residue.

The protein belongs to the vanadium-dependent haloperoxidase family. As to quaternary structure, homododecamer. The cofactor is Ca(2+). Vanadate serves as cofactor.

It catalyses the reaction RH + Br(-) + H2O2 = RBr + 2 H2O.. Its function is as follows. Catalyzes the halogenation of organic substrates in the presence of hydrogen peroxide. The sequence is that of Vanadium-dependent bromoperoxidase from Corallina officinalis (Coral seaweed).